A 465-amino-acid chain; its full sequence is ATP synthase subunit beta (465 aa).

Residue 151-158 (GGAGVGKT) coordinates ATP.

This sequence belongs to the ATPase alpha/beta chains family. F-type ATPases have 2 components, CF(1) - the catalytic core - and CF(0) - the membrane proton channel. CF(1) has five subunits: alpha(3), beta(3), gamma(1), delta(1), epsilon(1). CF(0) has four main subunits: a(1), b(1), b'(1) and c(9-12).

Its subcellular location is the cell inner membrane. It catalyses the reaction ATP + H2O + 4 H(+)(in) = ADP + phosphate + 5 H(+)(out). Its function is as follows. Produces ATP from ADP in the presence of a proton gradient across the membrane. The catalytic sites are hosted primarily by the beta subunits. In Chloroherpeton thalassium (strain ATCC 35110 / GB-78), this protein is ATP synthase subunit beta.